The chain runs to 143 residues: MAIERTFSIIKPDAVAKNHIGAIYNRFETAGLKIVAAKMLHLTKEQAEGFYAEHSERGFFGALVAFMTSGPIMVQVLEGENAVLAHREILGATNPAQAAPGTIRADFAQSIDENAAHGSDSLESAAREIAYFFSAEELCPRTR.

Positions 11, 59, 87, 93, 104, and 114 each coordinate ATP. His-117 serves as the catalytic Pros-phosphohistidine intermediate.

Belongs to the NDK family. In terms of assembly, homotetramer. Mg(2+) is required as a cofactor.

The protein localises to the cytoplasm. It catalyses the reaction a 2'-deoxyribonucleoside 5'-diphosphate + ATP = a 2'-deoxyribonucleoside 5'-triphosphate + ADP. It carries out the reaction a ribonucleoside 5'-diphosphate + ATP = a ribonucleoside 5'-triphosphate + ADP. In terms of biological role, major role in the synthesis of nucleoside triphosphates other than ATP. The ATP gamma phosphate is transferred to the NDP beta phosphate via a ping-pong mechanism, using a phosphorylated active-site intermediate. The sequence is that of Nucleoside diphosphate kinase from Shewanella sp. (strain MR-4).